The primary structure comprises 552 residues: AP-1-like transcription factor (552 aa).

Positions 1–14 (MSGQTETLSSTSNI) are enriched in polar residues. Residues 1-99 (MSGQTETLSS…QRAFRKRKED (99 aa)) are disordered. Residues 36–47 (PVSDRSSRRTSS) show a composition bias toward basic and acidic residues. Residues 48-61 (EEVDLMPNVDDEVD) are compositionally biased toward acidic residues. A compositionally biased stretch (basic and acidic residues) spans 62 to 80 (GDVKPKKIGRKNSDQEPSS). The bZIP domain maps to 76-139 (QEPSSKRKAQ…RQLEEELRIL (64 aa)). Residues 81–88 (KRKAQNRA) carry the Nuclear localization signal motif. The interval 81–102 (KRKAQNRAAQRAFRKRKEDHLK) is basic motif. Residues 104–111 (LETQVVTL) are leucine-zipper. The segment at 213–244 (QVPPTLVDSNSAQGTLSPETPSSSDSPSNLYL) is disordered. The span at 219 to 228 (VDSNSAQGTL) shows a compositional bias: polar residues. Residues 229–240 (SPETPSSSDSPS) are compositionally biased toward low complexity. The tract at residues 259–290 (CSALSNGENGEDVADGKQFCQKLSTACGSIAC) is n-CRD. Intrachain disulfides connect Cys278/Cys501 and Cys285/Cys532. A disordered region spans residues 460 to 489 (ISNHPDEVPPDGLPQKGKHDTSSQMPSENE). The tract at residues 501 to 532 (CPKVWSKIINHPRFESFDIDDLCSKLKNKAKC) is c-CRD. Residues 515 to 533 (ESFDIDDLCSKLKNKAKCS) carry the Nuclear export signal motif.

The protein belongs to the bZIP family. YAP subfamily. Homodimer. The reduced form of pap1 interacts in the nucleus with the nuclear export protein crm1, and in the cytoplasm with the peroxiredoxin tpx1. In terms of processing, depending on the oxidative stress inducing agent, pap1 can undergo two distinct conformational changes, both masking the nuclear export signal, thus abolishing nuclear export by crm1/exportin 1. The glutathione-depleting agent diethylmaleate (DEM) leads to the non-reversible modification of at least 2 cysteine residues in the c-CRD. Peroxide stress induces the formation of a tpx1-dependent interdomain disulfide bond between Cys-278 and Cys-501.

Its subcellular location is the nucleus. The protein resides in the cytoplasm. Transcription activator involved in multidrug resistance, oxidative stress response, and redox homeostasis. Regulates the transcription of genes encoding antioxidant enzymes like catalase ctt1 and components of the cellular thiol-reducing pathways, including the thioredoxin system (trx2, trr1), ABC transporters involved in multidrug resistance like bfr1/hba2 and pmd1 as well as the gene obr1/apt1. Preferentially binds to promoters with the core binding site 5'-TTA[CG]TAA-3'. Activity of the transcription factor is controlled through oxidation of specific cysteine residues resulting in the alteration of its subcellular location. Oxidative stress induces nuclear accumulation and as a result pap1 transcriptional activity. Required for sty1/spc1-conferred staurosporine resistance. The protein is AP-1-like transcription factor (pap1) of Schizosaccharomyces pombe (strain 972 / ATCC 24843) (Fission yeast).